The following is a 509-amino-acid chain: Cytochrome P450 monooxygenase AFT11-1 (509 aa).

Cys432 contributes to the heme binding site.

This sequence belongs to the cytochrome P450 family. It depends on heme as a cofactor.

It participates in mycotoxin biosynthesis. Its function is as follows. Cytochrome P450 monooxygenase; part of the gene clusters that mediate the biosynthesis of the host-selective toxins (HSTs) AF-toxins responsible for Alternaria black spot of strawberry disease by the strawberry pathotype. AF-toxin I and III are valine derivatives of 2,3-dyhydroxy-isovaleric acid and 2-hydroxy-isovaleric acid respectively, while AF II is an isoleucine derivative of 2-hydroxy-valeric acid. These derivatives are bound to a 9,10-epoxy-8-hydroxy-9-methyl-decatrienoic acid (EDA) moiety. On cellular level, AF-toxins affect plasma membrane of susceptible cells and cause a sudden increase in loss of K(+) after a few minutes of toxin treatment. The aldo-keto reductase AFTS1 catalyzes the conversion of 2-keto-isovaleric acid (2-KIV) to 2-hydroxy-isovaleric acid (2-HIV) by reduction of its ketone to an alcohol. The acyl-CoA ligase AFT1, the hydrolase AFT2 and the enoyl-CoA hydratases AFT3 and AFT6, but also the polyketide synthase AFT9, the acyl-CoA dehydrogenase AFT10, the cytochrome P450 monooxygenase AFT11 and the oxidoreductase AFT12 are all involved in the biosynthesis of the AK-, AF- and ACT-toxin common EDA structural moiety. The exact function of each enzyme, and of additional enzymes identified within the AF-toxin clusters have still to be determined. The polypeptide is Cytochrome P450 monooxygenase AFT11-1 (Alternaria alternata (Alternaria rot fungus)).